The chain runs to 394 residues: Mucosal addressin cell adhesion molecule 1 (394 aa).

The N-terminal stretch at 1 to 19 (MEPILALLLALGPFQLSRG) is a signal peptide. Ig-like domains lie at 20–107 (QSFQ…ILVY), 108–225 (AFPD…TSPE), and 256–345 (PSTP…YVTG). The Extracellular segment spans residues 20–353 (QSFQVNPPEP…TGQVIPNPSS (334 aa)). Residue asparagine 42 is glycosylated (N-linked (GlcNAc...) asparagine). 3 cysteine pairs are disulfide-bonded: cysteine 43/cysteine 89, cysteine 47/cysteine 93, and cysteine 130/cysteine 198. Residues 219–255 (QSQTSPEPPSTTSAKPYILTSSHTTKAVSTGLSSVAL) form a mucin-like region. A disulfide bond links cysteine 282 and cysteine 330. The helical transmembrane segment at 354–374 (MVALWIGSLVLGLLALAFLAY) threads the bilayer. The Cytoplasmic segment spans residues 375-394 (CLWKRYRPGPLPDSSSCTLL).

In terms of assembly, homodimer. Detected in Peyer patches and mesenteric lymph nodes but not in spleen.

The protein resides in the membrane. Functionally, cell adhesion leukocyte receptor expressed by mucosal venules, helps to direct lymphocyte traffic into mucosal tissues including the Peyer patches and the intestinal lamina propria. It can bind both the integrin alpha-4/beta-7 and L-selectin, regulating both the passage and retention of leukocytes. In Rattus norvegicus (Rat), this protein is Mucosal addressin cell adhesion molecule 1 (Madcam1).